A 290-amino-acid chain; its full sequence is Enoyl-CoA hydratase, mitochondrial (290 aa).

The transit peptide at 1–27 (MAALRVLLSCVRGPLRPPVRCPAWRPF) directs the protein to the mitochondrion. A Phosphothreonine modification is found at Thr-46. Residue 98 to 101 (ADIK) participates in substrate binding. Lys-101 bears the N6-acetyllysine; alternate mark. Lys-101 is modified (N6-succinyllysine; alternate). Position 114 is a phosphoserine (Ser-114). Lys-115 is subject to N6-acetyllysine; alternate. The residue at position 115 (Lys-115) is an N6-succinyllysine; alternate. Lys-118 is subject to N6-acetyllysine. Gly-141 serves as a coordination point for substrate. Position 204 is an N6-succinyllysine (Lys-204). The residue at position 211 (Lys-211) is an N6-acetyllysine.

This sequence belongs to the enoyl-CoA hydratase/isomerase family. Homohexamer; dimer of trimers. As to expression, liver, fibroblast, muscle. Barely detectable in spleen and kidney.

The protein localises to the mitochondrion matrix. It carries out the reaction a (3S)-3-hydroxyacyl-CoA = a (2E)-enoyl-CoA + H2O. The catalysed reaction is a (3E)-enoyl-CoA = a 4-saturated (2E)-enoyl-CoA. It catalyses the reaction (3E)-hexenoyl-CoA = (2E)-hexenoyl-CoA. The enzyme catalyses (3S)-3-hydroxybutanoyl-CoA = (2E)-butenoyl-CoA + H2O. It carries out the reaction 3-hydroxyisovaleryl-CoA = 3-methylbut-2-enoyl-CoA + H2O. The catalysed reaction is 3-hydroxypropanoyl-CoA = acryloyl-CoA + H2O. It catalyses the reaction 3-hydroxybutanoyl-CoA = (2E)-butenoyl-CoA + H2O. The enzyme catalyses 2-methylpropenoyl-CoA + H2O = (S)-3-hydroxyisobutanoyl-CoA. It carries out the reaction (3S)-hydroxyhexanoyl-CoA = (2E)-hexenoyl-CoA + H2O. The catalysed reaction is (3S)-hydroxydecanoyl-CoA = (2E)-decenoyl-CoA + H2O. It functions in the pathway lipid metabolism; fatty acid beta-oxidation. Functionally, converts unsaturated trans-2-enoyl-CoA species ((2E)-enoyl-CoA) to the corresponding (3S)-3hydroxyacyl-CoA species through addition of a water molecule to the double bond. Catalyzes the hydration of medium- and short-chained fatty enoyl-CoA thioesters from 4 carbons long (C4) up to C16. Has high substrate specificity for crotonyl-CoA ((2E)-butenoyl-CoA) and moderate specificity for acryloyl-CoA, 3-methylcrotonyl-CoA (3-methyl-(2E)-butenoyl-CoA) and methacrylyl-CoA ((2E)-2-methylpropenoyl-CoA). Can bind tiglyl-CoA (2-methylcrotonoyl-CoA), but hydrates only a small amount of this substrate. Plays a key role in the beta-oxidation spiral of short- and medium-chain fatty acid oxidation. At a lower rate than the hydratase reaction, catalyzes the isomerase reaction of trans-3-enoyl-CoA species (such as (3E)-hexenoyl-CoA) to trans-2-enoyl-CoA species (such as (2E)-hexenoyl-CoA), which are subsequently hydrated to 3(S)-3-hydroxyacyl-CoA species (such as (3S)-hydroxyhexanoyl-CoA). The polypeptide is Enoyl-CoA hydratase, mitochondrial (Homo sapiens (Human)).